The chain runs to 177 residues: Embryogenesis-like protein (177 aa).

Residues 98-118 (VDEINLKFAEAREEIEMAMDA) are a coiled coil.

Interacts with HAG1/GCN5. As to expression, expressed in flowers, leaves, stems and siliques.

It localises to the nucleus. Functionally, activates gene expression by recruiting HAG1/GCN5 and triggering subsequent histone H3 acetylation of target genes promoters. This chain is Embryogenesis-like protein, found in Arabidopsis thaliana (Mouse-ear cress).